We begin with the raw amino-acid sequence, 237 residues long: Phosphoadenosine 5'-phosphosulfate reductase (237 aa).

Cys-231 (nucleophile; cysteine thiosulfonate intermediate) is an active-site residue.

It belongs to the PAPS reductase family. CysH subfamily.

It is found in the cytoplasm. It catalyses the reaction [thioredoxin]-disulfide + sulfite + adenosine 3',5'-bisphosphate + 2 H(+) = [thioredoxin]-dithiol + 3'-phosphoadenylyl sulfate. It functions in the pathway sulfur metabolism; hydrogen sulfide biosynthesis; sulfite from sulfate: step 3/3. Functionally, catalyzes the formation of sulfite from phosphoadenosine 5'-phosphosulfate (PAPS) using thioredoxin as an electron donor. The sequence is that of Phosphoadenosine 5'-phosphosulfate reductase from Xylella fastidiosa (strain M23).